Reading from the N-terminus, the 474-residue chain is MTKKLHIKTWGCQMNEYDSSKMADLLASTHGYQLTEIPEEADLLLLNTCSIREKAQEKVFSLLGQWKLLKEKNPELIIGVGGCVASQEGEHLRQRAPCVDVIFGPQTLHRLPEMINHVQGTHSPVVDISFPEIEKFDRLPEPRAEGPTAFVSIMEGCNKYCTFCVVPYTRGEEVSRPSDDILFEIAQLAAQGVREVNLLGQNVNAYRGATYDGDICSFAELLRLVAAIDGIDRVRFTTSHPIEFTDDIIDVYRDTPELVSFLHLPVQSGSDRILTMMKRAHTALEYKAIIRKLRQARPDIQISSDFIIGFPGETQQDFEQTMKLVADVRFDTSYSFIYSPRPGTPAADLPDDVSEEEKKQRLHILQQRITQQAMEISREMVGTVQRILVEGTSRKNVMELAGRTENNRVVNFEGTPEMIGKFVDVEIVDVYASSLRGILLRTEDQMDLRIHESPQSVIARTRKENELGVGLYQP.

The region spanning 3-120 is the MTTase N-terminal domain; sequence KKLHIKTWGC…LPEMINHVQG (118 aa). [4Fe-4S] cluster is bound by residues C12, C49, C83, C157, C161, and C164. In terms of domain architecture, Radical SAM core spans 143 to 375; the sequence is RAEGPTAFVS…QQRITQQAME (233 aa). Residues 378–441 form the TRAM domain; the sequence is REMVGTVQRI…ASSLRGILLR (64 aa).

Belongs to the methylthiotransferase family. MiaB subfamily. As to quaternary structure, monomer. [4Fe-4S] cluster serves as cofactor.

It is found in the cytoplasm. It catalyses the reaction N(6)-dimethylallyladenosine(37) in tRNA + (sulfur carrier)-SH + AH2 + 2 S-adenosyl-L-methionine = 2-methylsulfanyl-N(6)-dimethylallyladenosine(37) in tRNA + (sulfur carrier)-H + 5'-deoxyadenosine + L-methionine + A + S-adenosyl-L-homocysteine + 2 H(+). Its function is as follows. Catalyzes the methylthiolation of N6-(dimethylallyl)adenosine (i(6)A), leading to the formation of 2-methylthio-N6-(dimethylallyl)adenosine (ms(2)i(6)A) at position 37 in tRNAs that read codons beginning with uridine. The chain is tRNA-2-methylthio-N(6)-dimethylallyladenosine synthase from Yersinia enterocolitica serotype O:8 / biotype 1B (strain NCTC 13174 / 8081).